The chain runs to 145 residues: Large ribosomal subunit protein uL16 (145 aa).

Basic and acidic residues predominate over residues 76–95 (PKTKTPAETRMGKGKGEPEH). The disordered stretch occupies residues 76–97 (PKTKTPAETRMGKGKGEPEHFV).

The protein belongs to the universal ribosomal protein uL16 family. In terms of assembly, part of the 50S ribosomal subunit.

Binds 23S rRNA and is also seen to make contacts with the A and possibly P site tRNAs. The polypeptide is Large ribosomal subunit protein uL16 (Salinibacter ruber (strain DSM 13855 / M31)).